We begin with the raw amino-acid sequence, 370 residues long: MGNVPSAVKHCLSYQQLLREHLWIGDSVAGALDPAQTSLLTNLHCFQPDVSGFSVSLAGTVACIHWETSQLSGLPEFVKIVEVGPRDGLQNEKVIVPTDIKIEFINRLSQTGLSVIEVTSFVSSRWVPQMADHTEVMKGIHQYPGVRYPVLTPNLQGFHHAVAAGATEISVFGAASESFSKKNINCSIEESMGKFEEVVKSARHMNIPARGYVSCALGCPYEGSITPQKVTEVSKRLYGMGCYEISLGDTIGVGTPGSMKRMLESVMKEIPPGALAVHCHDTYGQALANILTALQMGINVVDSAVSGLGGCPYAKGASGNVATEDLIYMLNGLGLNTGVNLYKVMEAGDFICKAVNKTTNSKVAQASFNA.

Gly2 carries N-myristoyl glycine lipidation. A Pyruvate carboxyltransferase domain is found at 78–345 (VKIVEVGPRD…NTGVNLYKVM (268 aa)). Arg86 is a substrate binding site. 3 residues coordinate a divalent metal cation: Asp87, His278, and His280. The active site involves Cys311. Residue Asn320 participates in a divalent metal cation binding.

The protein belongs to the HMG-CoA lyase family. A divalent metal cation is required as a cofactor.

It is found in the cytoplasm. The protein resides in the cytosol. Its subcellular location is the endoplasmic reticulum membrane. It carries out the reaction (3S)-3-hydroxy-3-methylglutaryl-CoA = acetoacetate + acetyl-CoA. Its pathway is metabolic intermediate metabolism; (S)-3-hydroxy-3-methylglutaryl-CoA degradation; acetoacetate from (S)-3-hydroxy-3-methylglutaryl-CoA: step 1/1. Its function is as follows. Non-mitochondrial 3-hydroxy-3-methylglutaryl-CoA lyase that catalyzes a cation-dependent cleavage of (S)-3-hydroxy-3-methylglutaryl-CoA into acetyl-CoA and acetoacetate, a key step in ketogenesis, the products of which support energy production in nonhepatic animal tissues. This is 3-hydroxy-3-methylglutaryl-CoA lyase, cytoplasmic (HMGCLL1) from Homo sapiens (Human).